The following is a 180-amino-acid chain: FMN reductase (NADH) RutF (180 aa).

This sequence belongs to the non-flavoprotein flavin reductase family. RutF subfamily.

It catalyses the reaction FMNH2 + NAD(+) = FMN + NADH + 2 H(+). Functionally, catalyzes the reduction of FMN to FMNH2 which is used to reduce pyrimidine by RutA via the Rut pathway. The protein is FMN reductase (NADH) RutF of Variovorax paradoxus (strain S110).